The sequence spans 203 residues: NAD(P)H dehydrogenase (quinone) (203 aa).

The region spanning 3-194 (VLIPFYSMYG…AGARYQGKYI (192 aa)) is the Flavodoxin-like domain. FMN is bound by residues 9-14 (SMYGHI) and 82-84 (TRF). Tyr11 is an NAD(+) binding site. Trp102 is a binding site for substrate. FMN contacts are provided by residues 117–123 (SSATQHG) and His138.

Belongs to the WrbA family. Requires FMN as cofactor.

The catalysed reaction is a quinone + NADH + H(+) = a quinol + NAD(+). The enzyme catalyses a quinone + NADPH + H(+) = a quinol + NADP(+). This Geobacter metallireducens (strain ATCC 53774 / DSM 7210 / GS-15) protein is NAD(P)H dehydrogenase (quinone).